A 218-amino-acid polypeptide reads, in one-letter code: Fucoxanthin-chlorophyll a-c binding protein, chloroplastic (218 aa).

The N-terminal 36 residues, 1–36 (MFYSAAVAALMVGSASAFLAPAQFNSVAKSSGALSM), are a transit peptide targeting the chloroplast.

The protein belongs to the fucoxanthin chlorophyll protein family. The LHC complex of chromophytic algae is composed of fucoxanthin, chlorophyll A and C bound non-covalently by fucoxanthin chlorophyll proteins (FCPs). The ratio of pigments in this LHC is; fucoxanthin: chlorophyll C: chlorophyll A; (0.6-1): (0.1-0.3): (1).

The protein resides in the plastid. The protein localises to the chloroplast thylakoid membrane. In terms of biological role, the light-harvesting complex (LHC) functions as a light receptor, it captures and delivers excitation energy to photosystems with which it is closely associated. Energy is transferred from the carotenoid and chlorophyll C (or B) to chlorophyll A and the photosynthetic reaction centers where it is used to synthesize ATP and reducing power. This Chattonella marina var. antiqua (Red tide flagellate) protein is Fucoxanthin-chlorophyll a-c binding protein, chloroplastic.